The following is a 464-amino-acid chain: MSNLFQRDDDIVALATPFLSSALCVIRSSGASSIPKFSKIFSNHSALNSAPGNTIHYGYILDNENNCKVDEVVVCLYRAPKSFTGQDSIEVIAHGSVIGIKKIIDLFLKSGFRMAEPGEFTLRSFLAKKIALTKAEALHEIIFATTNKTYSLAVTPLSGALFANLDAIQRCLLNILSAVSAYLDYEVDDHEISIPFDLILNSKAELKKLINSYKVYEKIDHGVTLVLAGSVNAGKSSLFNMFLKKDRSIVSSYPGTTRDYIEATFELDGILFNLFDTAGLKDADNFVERLGIEKSNSLIKEASLVIYVIDVSSNLPREDFLFIDSNKSNSKILFVLNKIDLNINKSTEEFVRSSVLNSSNLIMISTKNLEGIDILYDKIKTLISYERVEIGLDDIIISSSRQMQLLEKAYALVLDLLNKIDRQVSYDMLAFDAYEIINCLGEITGEVSSEDVLDNMFKNFCLGK.

The (6S)-5-formyl-5,6,7,8-tetrahydrofolate site is built by arginine 27, glutamate 90, and lysine 129. In terms of domain architecture, TrmE-type G spans 222–384 (GVTLVLAGSV…LYDKIKTLIS (163 aa)). GTP contacts are provided by residues 232 to 237 (NAGKSS), 251 to 257 (SSYPGTT), and 276 to 279 (DTAG). Mg(2+) contacts are provided by serine 236 and threonine 257. Lysine 464 is a (6S)-5-formyl-5,6,7,8-tetrahydrofolate binding site.

The protein belongs to the TRAFAC class TrmE-Era-EngA-EngB-Septin-like GTPase superfamily. TrmE GTPase family. In terms of assembly, homodimer. Heterotetramer of two MnmE and two MnmG subunits. K(+) serves as cofactor.

The protein localises to the cytoplasm. In terms of biological role, exhibits a very high intrinsic GTPase hydrolysis rate. Involved in the addition of a carboxymethylaminomethyl (cmnm) group at the wobble position (U34) of certain tRNAs, forming tRNA-cmnm(5)s(2)U34. This chain is tRNA modification GTPase MnmE, found in Borrelia garinii subsp. bavariensis (strain ATCC BAA-2496 / DSM 23469 / PBi) (Borreliella bavariensis).